Reading from the N-terminus, the 274-residue chain is Copper chaperone for superoxide dismutase (274 aa).

The 64-residue stretch at 11–74 (VCALEFAVQM…LLESTGRQAV (64 aa)) folds into the HMA domain. Residues Cys-22 and Cys-25 each coordinate Cu cation. Lys-76 is covalently cross-linked (Glycyl lysine isopeptide (Lys-Gly) (interchain with G-Cter in ubiquitin)). Positions 88–234 (AAVAILEGCG…LACGIIARSA (147 aa)) are superoxide dismutase-like. Cys-141 and Cys-227 are joined by a disulfide. Zn(2+)-binding residues include His-147, His-155, His-164, and Asp-167. Glycyl lysine isopeptide (Lys-Gly) (interchain with G-Cter in ubiquitin) cross-links involve residues Lys-189, Lys-216, and Lys-241. Residues Cys-244 and Cys-246 each contribute to the Cu cation site. Position 267 is a phosphoserine (Ser-267).

In the C-terminal section; belongs to the Cu-Zn superoxide dismutase family. As to quaternary structure, homodimer, and heterodimer with SOD1. Interacts with COMMD1. Interacts with XIAP/BIRC4. Interacts with SLC31A1(via C-terminal domain); this interaction is Cu(1+)-mediated. The heterodimer CCS:SOD1 interacts with SLC31A1; this heterotrimer is Cu(1+)-mediated and its maintenance is regulated through SOD1 activation. Cu(2+) is required as a cofactor. The cofactor is Zn(2+). In terms of processing, ubiquitinion by XIAP/BIRC4 leads to enhancement of its chaperone activity toward its physiologic target, SOD1, rather than proteasomal degradation. XIAP/BIRC4 preferentially ubiquitinates at Lys-241. In terms of tissue distribution, ubiquitous.

Its subcellular location is the cytoplasm. Functionally, delivers copper to copper zinc superoxide dismutase (SOD1). In Mus musculus (Mouse), this protein is Copper chaperone for superoxide dismutase.